Consider the following 61-residue polypeptide: Small ribosomal subunit protein uS14 (61 aa).

Zn(2+) is bound by residues Cys24, Cys27, Cys40, and Cys43.

The protein belongs to the universal ribosomal protein uS14 family. Zinc-binding uS14 subfamily. Part of the 30S ribosomal subunit. Contacts proteins S3 and S10. Requires Zn(2+) as cofactor.

Binds 16S rRNA, required for the assembly of 30S particles and may also be responsible for determining the conformation of the 16S rRNA at the A site. This chain is Small ribosomal subunit protein uS14, found in Geobacter sp. (strain M21).